The sequence spans 930 residues: Isoleucine--tRNA ligase (930 aa).

The 'HIGH' region motif lies at 57–67 (PYANGNIHVGH). Position 554 (glutamate 554) interacts with L-isoleucyl-5'-AMP. The short motif at 595–599 (KMSKS) is the 'KMSKS' region element. Position 598 (lysine 598) interacts with ATP. 4 residues coordinate Zn(2+): cysteine 888, cysteine 891, cysteine 908, and cysteine 911.

Belongs to the class-I aminoacyl-tRNA synthetase family. IleS type 1 subfamily. In terms of assembly, monomer. It depends on Zn(2+) as a cofactor.

It is found in the cytoplasm. It carries out the reaction tRNA(Ile) + L-isoleucine + ATP = L-isoleucyl-tRNA(Ile) + AMP + diphosphate. In terms of biological role, catalyzes the attachment of isoleucine to tRNA(Ile). As IleRS can inadvertently accommodate and process structurally similar amino acids such as valine, to avoid such errors it has two additional distinct tRNA(Ile)-dependent editing activities. One activity is designated as 'pretransfer' editing and involves the hydrolysis of activated Val-AMP. The other activity is designated 'posttransfer' editing and involves deacylation of mischarged Val-tRNA(Ile). This is Isoleucine--tRNA ligase from Streptococcus pneumoniae (strain ATCC 700669 / Spain 23F-1).